We begin with the raw amino-acid sequence, 106 residues long: uncharacterized protein (106 aa).

A run of 2 helical transmembrane segments spans residues Val10–Val30 and Leu65–Tyr85.

The protein localises to the membrane. This is an uncharacterized protein from Saccharomyces cerevisiae (strain ATCC 204508 / S288c) (Baker's yeast).